A 138-amino-acid polypeptide reads, in one-letter code: Large ribosomal subunit protein uL16 (138 aa).

Over residues 1–15 (MLSPRKVKYRKKQRG) the composition is skewed to basic residues. Positions 1–21 (MLSPRKVKYRKKQRGRLSGEA) are disordered.

It belongs to the universal ribosomal protein uL16 family. As to quaternary structure, part of the 50S ribosomal subunit.

In terms of biological role, binds 23S rRNA and is also seen to make contacts with the A and possibly P site tRNAs. This Borrelia recurrentis (strain A1) protein is Large ribosomal subunit protein uL16.